A 365-amino-acid chain; its full sequence is Peptidyl-prolyl cis-trans isomerase FKBP42 (365 aa).

The segment covering 1–15 has biased composition (basic and acidic residues); the sequence is MDESLEHQTQTHDQE. Residues 1-44 are disordered; the sequence is MDESLEHQTQTHDQESEIVTEGSAVVHSEPSQEGNVPPKVDSEA. Residues 1–163 are interaction with MDR1/PGP1; sequence MDESLEHQTQ…EVIGFDETKE (163 aa). Residues 67-159 enclose the PPIase FKBP-type domain; sequence YSTCFLHYRA…LYEVEVIGFD (93 aa). The segment at 163 to 337 is interaction with MRP1; sequence EGKARSDMTV…GKDEGGAKSK (175 aa). TPR repeat units follow at residues 179 to 212, 230 to 263, and 264 to 297; these read ADRRKMDGNSLFKEEKLEEAMQQYEMAIAYMGDD, NPCHLNIAACLIKLKRYDEAIGHCNIVLTEEEKN, and PKALFRRGKAKAELGQMDSARDDFRKAQKYAPDD. Positions 310–326 are calmodulin-binding; that stretch reads QEKALYQKQKEMYKGIF. The helical; Anchor for type IV membrane protein transmembrane segment at 338 to 357 threads the bilayer; that stretch reads SLFWLIVLWQWFVSLFSRIF.

Belongs to the FKBP-type PPIase family. Interacts with calmodulin (CaM), MRP1, MRP2, MDR1/PGP1, MDR11/PGP19 and SHD/HSP90. Interacts with 1-naphthylphthalamic acid (NPA).

The protein resides in the cell membrane. It is found in the vacuole membrane. Its subcellular location is the endoplasmic reticulum. It catalyses the reaction [protein]-peptidylproline (omega=180) = [protein]-peptidylproline (omega=0). Functionally, PPIases accelerate the folding of proteins. It catalyzes the cis-trans isomerization of proline imidic peptide bonds in oligopeptides. Modulates the uptake of MRP substrates into the vacuole; reduces metolachlor-GS (MOC-GS) and enhances 17-beta-estradiol 17-(beta-D-glucuronide) (E(2)17betaG) uptake. Regulates cell elongation and orientation. Functions as a positive regulator of PGP1-mediated auxin transport. Confers drug modulation of PGP1 efflux activity as interaction with NPA or flavonol quercetin prevents its physical and functional interaction with PGP1. Required for the proper localization of auxin-related ABCB transporters. Plays a role in brassinosteroid (BR) signaling pathway. Required for seed development by promoting stamen elongation and, to a lesser extent, anther dehiscence and pollen maturation, probably as a chaperone helping ABCB1 and ABCB19 auxin transporters localization and activation. Involved in auxin signaling in nectaries to promote starch accumulation to attract visiting pollinators. The chain is Peptidyl-prolyl cis-trans isomerase FKBP42 from Arabidopsis thaliana (Mouse-ear cress).